A 621-amino-acid chain; its full sequence is Putative 5'-3' exonuclease R528 (621 aa).

Belongs to the 5'-3' exonuclease family.

The protein localises to the virion. This Acanthamoeba polyphaga mimivirus (APMV) protein is Putative 5'-3' exonuclease R528.